Here is a 529-residue protein sequence, read N- to C-terminus: uncharacterized protein (529 aa).

Residues 26–58 (CDSCRKQKTRCLAGSVEDENRACLRCRSLNMDC) constitute a DNA-binding region (zn(2)-C6 fungal-type).

It is found in the nucleus. This is an uncharacterized protein from Schizosaccharomyces pombe (strain 972 / ATCC 24843) (Fission yeast).